Here is an 81-residue protein sequence, read N- to C-terminus: Small ribosomal subunit protein uS17 (81 aa).

Belongs to the universal ribosomal protein uS17 family. Part of the 30S ribosomal subunit.

Its function is as follows. One of the primary rRNA binding proteins, it binds specifically to the 5'-end of 16S ribosomal RNA. This Hyphomonas neptunium (strain ATCC 15444) protein is Small ribosomal subunit protein uS17.